Consider the following 474-residue polypeptide: MSILHSFNKDTICAVATAPGVGGIAVIRVSGADAFRLVSPLFLYRGKAIDLSGAKPRTALYGEIMEADELIDEVILTCFHGPHSFTAEHTVEIACHGSIYIRRRILEALINQGCRLAQPGEFTRRAYLNGRMDLSSAEAVADIIASESKAQHQMAMKQLRGGYSEELNALREELLRLTGLMELELDFPEEDVEFADRTELLALCDQIELKLKKLIDSYRLGNAVKRGIPVAIVGTTNVGKSTLLNTLLGEERAIVSDIHGTTRDTIEDTMHIGGYLFRFVDTAGLRETEDTIESLGIERSRSKIKEADIILAVVDGTRISEANQLDYIKSIWDEREERTLILLVNKSESLAEADRIGLSETLQTKLSTPTKPIFISAREGRGIDELKGELTQIMETSGANEADLIVSNARHHQLLREAFDALRRMRLGFDMGLSTDLLTLDLRHAITSIGEITGREITSDDTLHYIFAHFCIGK.

The (6S)-5-formyl-5,6,7,8-tetrahydrofolate site is built by Arg28, Glu92, and Arg131. Positions 227 to 395 constitute a TrmE-type G domain; the sequence is GIPVAIVGTT…LKGELTQIME (169 aa). A K(+)-binding site is contributed by Asn237. Residues 237-242, 256-262, 281-284, and 376-378 each bind GTP; these read NVGKST, SDIHGTT, DTAG, and SAR. Ser241 contributes to the Mg(2+) binding site. K(+)-binding residues include Ser256, Ile258, and Thr261. Residue Thr262 coordinates Mg(2+). Lys474 contacts (6S)-5-formyl-5,6,7,8-tetrahydrofolate.

The protein belongs to the TRAFAC class TrmE-Era-EngA-EngB-Septin-like GTPase superfamily. TrmE GTPase family. Homodimer. Heterotetramer of two MnmE and two MnmG subunits. The cofactor is K(+).

The protein resides in the cytoplasm. Its function is as follows. Exhibits a very high intrinsic GTPase hydrolysis rate. Involved in the addition of a carboxymethylaminomethyl (cmnm) group at the wobble position (U34) of certain tRNAs, forming tRNA-cmnm(5)s(2)U34. The polypeptide is tRNA modification GTPase MnmE (Porphyromonas gingivalis (strain ATCC BAA-308 / W83)).